A 132-amino-acid polypeptide reads, in one-letter code: Glycine cleavage system H protein (132 aa).

The 83-residue stretch at 24–106 (IATIGLSAFA…YGDGWLIKVR (83 aa)) folds into the Lipoyl-binding domain. N6-lipoyllysine is present on K65.

This sequence belongs to the GcvH family. As to quaternary structure, the glycine cleavage system is composed of four proteins: P, T, L and H. (R)-lipoate is required as a cofactor.

The glycine cleavage system catalyzes the degradation of glycine. The H protein shuttles the methylamine group of glycine from the P protein to the T protein. This chain is Glycine cleavage system H protein, found in Rippkaea orientalis (strain PCC 8801 / RF-1) (Cyanothece sp. (strain PCC 8801)).